We begin with the raw amino-acid sequence, 263 residues long: Diphthine synthase (263 aa).

S-adenosyl-L-methionine contacts are provided by residues L9, D84, M87, 112–113, L164, A207, and H232; that span reads SI.

The protein belongs to the diphthine synthase family. In terms of assembly, homodimer.

The catalysed reaction is 2-[(3S)-amino-3-carboxypropyl]-L-histidyl-[translation elongation factor 2] + 3 S-adenosyl-L-methionine = diphthine-[translation elongation factor 2] + 3 S-adenosyl-L-homocysteine + 3 H(+). Its pathway is protein modification; peptidyl-diphthamide biosynthesis. Functionally, S-adenosyl-L-methionine-dependent methyltransferase that catalyzes the trimethylation of the amino group of the modified target histidine residue in translation elongation factor 2 (EF-2), to form an intermediate called diphthine. The three successive methylation reactions represent the second step of diphthamide biosynthesis. The chain is Diphthine synthase from Methanosphaera stadtmanae (strain ATCC 43021 / DSM 3091 / JCM 11832 / MCB-3).